Here is a 1039-residue protein sequence, read N- to C-terminus: Potassium-transporting ATPase alpha chain 2 (1039 aa).

The Cytoplasmic portion of the chain corresponds to 1–102 (MHQKTPEIYS…NSLTPPKQTP (102 aa)). A helical membrane pass occupies residues 103 to 123 (EIVKFLKQMVGGFSILLWVGA). Over 124–146 (FLCWIAYGIQYSSDKSASLNNVY) the chain is Lumenal. Residues 147–167 (LGCVLGLVVILTGIFAYYQEA) traverse the membrane as a helical segment. Residues 168–303 (KSTNIMSSFN…NEKTPIAIEI (136 aa)) are Cytoplasmic-facing. The chain crosses the membrane as a helical span at residues 304–323 (EHFVHIVAGVAVSIGILFFI). The Lumenal portion of the chain corresponds to 324–335 (IAVSLKYQVLDS). A helical transmembrane segment spans residues 336–353 (IIFLIGIIVANVPEGLLA). Topologically, residues 354–787 (TVTVTLSLTA…EEGRLIFDNL (434 aa)) are cytoplasmic. Aspartate 391 acts as the 4-aspartylphosphate intermediate in catalysis. Positions 732 and 736 each coordinate Mg(2+). Residues 788–807 (KKTIAYSLTKNIAELCPFLI) form a helical membrane-spanning segment. The Lumenal segment spans residues 808–817 (YIIVGLPLPI). A helical transmembrane segment spans residues 818-838 (GTITILFIDLGTDIIPSIALA). Residues 839-858 (YEKAESDIMNRKPRHKNKDR) are Cytoplasmic-facing. Residues 859–881 (LVNQPLAVYSYLHIGLMQALGAF) traverse the membrane as a helical segment. Topologically, residues 882-933 (LVYFTVYAQEGFLPRTLINLRVEWEKDYVNDLKDSYGQEWTRYQREYLEWTG) are lumenal. The helical transmembrane segment at 934–953 (YTAFFVGILVQQIADLIIRK) threads the bilayer. Topologically, residues 954-967 (TRRNSIFQQGLFRN) are cytoplasmic. Serine 958 is subject to Phosphoserine; by PKA. The helical transmembrane segment at 968 to 986 (KVIWVGITSQIIIGLILSY) threads the bilayer. The Lumenal portion of the chain corresponds to 987-1001 (GLGSVTALSFTMLRA). Residues 1002–1022 (QYWFVAVPHAILIWVYDEVRK) traverse the membrane as a helical segment. Residues 1023 to 1039 (LFIRLYPGSWWDKNMYY) are Cytoplasmic-facing.

It belongs to the cation transport ATPase (P-type) (TC 3.A.3) family. Type IIC subfamily. The ATPase pump is composed of a catalytic alpha subunit and an auxiliary non-catalytic beta subunit. The alpha subunit pairs with the beta subunit of gastric H(+)/K(+) ATPase ATP4B or the beta subunit of Na(+)/K(+) ATPases ATP1B1 and ATP1B3; this interaction is required for the formation of a functionally active pump and its targeting at the plasma membrane. In terms of tissue distribution, expressed in airway epithelial cells (at protein level). Found in skin and kidney. Detected in prostate basal cells (at protein level). Expression is increased in benign prostate hyperplasia and tumor tissues (at protein level).

Its subcellular location is the apical cell membrane. The catalysed reaction is K(+)(out) + ATP + H2O + H(+)(in) = K(+)(in) + ADP + phosphate + 2 H(+)(out). The enzyme catalyses K(+)(out) + Na(+)(in) + ATP + H2O = K(+)(in) + Na(+)(out) + ADP + phosphate + H(+). The ATPase activity is regulated by monovalent cations and pH. Up-regulated by K(+) ions in a dose-dependent way. Down-regulated by Na(+) ions. Inhibited by Na(+)/K(+)-ATPase inhibitor ouabain and H(+)/K(+)-ATPase inhibitor SCH-28080 with an intermediate sensitivity to completely resistant Na(+)/K(+)-ATPases and highly sensitive H(+)/K(+)-ATPases. Functionally, the catalytic subunit of a H(+)/K(+) ATPase and/or Na(+)/K(+) ATPase pump which transports K(+) ions in exchange for Na(+) and/or H(+) ions across the apical membrane of epithelial cells. Uses ATP as an energy source to pump K(+) ions into the cell while transporting Na(+) and/or H(+) ions to the extracellular compartment. Involved in the maintenance of electrolyte homeostasis through K(+) ion absorption in kidney and colon. In the airway epithelium, may play a primary role in mucus acidification regulating its viscosity and clearance. This chain is Potassium-transporting ATPase alpha chain 2, found in Homo sapiens (Human).